The following is a 171-amino-acid chain: Nicotinamide-nucleotide adenylyltransferase (171 aa).

Belongs to the archaeal NMN adenylyltransferase family.

The protein resides in the cytoplasm. The enzyme catalyses beta-nicotinamide D-ribonucleotide + ATP + H(+) = diphosphate + NAD(+). It participates in cofactor biosynthesis; NAD(+) biosynthesis; NAD(+) from nicotinamide D-ribonucleotide: step 1/1. The polypeptide is Nicotinamide-nucleotide adenylyltransferase (Ignicoccus hospitalis (strain KIN4/I / DSM 18386 / JCM 14125)).